We begin with the raw amino-acid sequence, 314 residues long: Putative peptide transport system permease protein BRA1092/BS1330_II1084 (314 aa).

Transmembrane regions (helical) follow at residues 12–32 (AIPV…LLPG), 101–121 (LALL…VVAA), 135–155 (LALL…VILF), 177–197 (WLRS…GYLA), 237–257 (VSVL…SVVI), and 286–306 (MLFL…LYTI). The 210-residue stretch at 95 to 304 (LPVTISLALL…AINVLVDILY (210 aa)) folds into the ABC transmembrane type-1 domain.

Belongs to the binding-protein-dependent transport system permease family. The complex is composed of two ATP-binding proteins (BRA1094), two transmembrane proteins (BRA1092 and BRA1093) and a solute-binding protein (BRA1090).

The protein resides in the cell inner membrane. In terms of biological role, probably part of an ABC transporter complex that could be involved in peptide import. Probably responsible for the translocation of the substrate across the membrane. The sequence is that of Putative peptide transport system permease protein BRA1092/BS1330_II1084 from Brucella suis biovar 1 (strain 1330).